A 101-amino-acid chain; its full sequence is A-type ATP synthase subunit F (101 aa).

Belongs to the V-ATPase F subunit family. Has multiple subunits, A(3), B(3), C, D, E, F, G, I and K(x); there may be a few other subunits as well.

It localises to the cell membrane. Its function is as follows. Component of the A-type ATP synthase that produces ATP from ADP in the presence of a proton gradient across the membrane. The protein is A-type ATP synthase subunit F of Methanosarcina mazei (strain ATCC BAA-159 / DSM 3647 / Goe1 / Go1 / JCM 11833 / OCM 88) (Methanosarcina frisia).